Reading from the N-terminus, the 214-residue chain is Phosphatidylserine decarboxylase proenzyme (214 aa).

Serine 182 acts as the Schiff-base intermediate with substrate; via pyruvic acid in catalysis. Serine 182 is subject to Pyruvic acid (Ser); by autocatalysis.

The protein belongs to the phosphatidylserine decarboxylase family. PSD-A subfamily. As to quaternary structure, heterodimer of a large membrane-associated beta subunit and a small pyruvoyl-containing alpha subunit. Requires pyruvate as cofactor. Post-translationally, is synthesized initially as an inactive proenzyme. Formation of the active enzyme involves a self-maturation process in which the active site pyruvoyl group is generated from an internal serine residue via an autocatalytic post-translational modification. Two non-identical subunits are generated from the proenzyme in this reaction, and the pyruvate is formed at the N-terminus of the alpha chain, which is derived from the carboxyl end of the proenzyme. The post-translation cleavage follows an unusual pathway, termed non-hydrolytic serinolysis, in which the side chain hydroxyl group of the serine supplies its oxygen atom to form the C-terminus of the beta chain, while the remainder of the serine residue undergoes an oxidative deamination to produce ammonia and the pyruvoyl prosthetic group on the alpha chain.

It localises to the cell membrane. The catalysed reaction is a 1,2-diacyl-sn-glycero-3-phospho-L-serine + H(+) = a 1,2-diacyl-sn-glycero-3-phosphoethanolamine + CO2. It functions in the pathway phospholipid metabolism; phosphatidylethanolamine biosynthesis; phosphatidylethanolamine from CDP-diacylglycerol: step 2/2. Its function is as follows. Catalyzes the formation of phosphatidylethanolamine (PtdEtn) from phosphatidylserine (PtdSer). This Burkholderia cenocepacia (strain HI2424) protein is Phosphatidylserine decarboxylase proenzyme.